Reading from the N-terminus, the 63-residue chain is Translational regulator CsrA (63 aa).

This sequence belongs to the CsrA/RsmA family. In terms of assembly, homodimer; the beta-strands of each monomer intercalate to form a hydrophobic core, while the alpha-helices form wings that extend away from the core.

The protein localises to the cytoplasm. In terms of biological role, a key translational regulator that binds mRNA to regulate translation initiation and/or mRNA stability. Mediates global changes in gene expression, shifting from rapid growth to stress survival by linking envelope stress, the stringent response and the catabolite repression systems. Usually binds in the 5'-UTR; binding at or near the Shine-Dalgarno sequence prevents ribosome-binding, repressing translation, binding elsewhere in the 5'-UTR can activate translation and/or stabilize the mRNA. Its function is antagonized by small RNA(s). The sequence is that of Translational regulator CsrA from Haemophilus influenzae (strain 86-028NP).